Consider the following 225-residue polypeptide: NAD(P)H-quinone oxidoreductase subunit K, chloroplastic (225 aa).

Positions 43, 44, 108, and 139 each coordinate [4Fe-4S] cluster.

This sequence belongs to the complex I 20 kDa subunit family. As to quaternary structure, NDH is composed of at least 16 different subunits, 5 of which are encoded in the nucleus. Requires [4Fe-4S] cluster as cofactor.

Its subcellular location is the plastid. It localises to the chloroplast thylakoid membrane. The catalysed reaction is a plastoquinone + NADH + (n+1) H(+)(in) = a plastoquinol + NAD(+) + n H(+)(out). It carries out the reaction a plastoquinone + NADPH + (n+1) H(+)(in) = a plastoquinol + NADP(+) + n H(+)(out). In terms of biological role, NDH shuttles electrons from NAD(P)H:plastoquinone, via FMN and iron-sulfur (Fe-S) centers, to quinones in the photosynthetic chain and possibly in a chloroplast respiratory chain. The immediate electron acceptor for the enzyme in this species is believed to be plastoquinone. Couples the redox reaction to proton translocation, and thus conserves the redox energy in a proton gradient. The polypeptide is NAD(P)H-quinone oxidoreductase subunit K, chloroplastic (Nicotiana tabacum (Common tobacco)).